The sequence spans 668 residues: E3 ubiquitin-protein ligase RNF139 (668 aa).

Ala-2 carries the post-translational modification N-acetylalanine. Transmembrane regions (helical) follow at residues 51–71 (IGLQIFLRLLGIVVSSIVLIL), 85–105 (AFLLAATSVLVNYYAALHIDF), 125–145 (SLWMALIVLQLTFGIGYVTLL), 154–174 (LMILNILVPIIGLITELPLHI), 178–198 (VVLMSSLILIFNTVLVLAVKL), 293–313 (GMSAVISSIAHYLGLGILAFI), 323–343 (LGFVAPVLFFILALQTGLSGL), 356–376 (MCLLLTAVLHFIHGMTDPVLM), 390–410 (FPVLFVSACLFILPVLLSYVL), 420–440 (LFAVTAFCVELCLKVIVSLTV), and 470–490 (IIEFIFGVVMFGNGAYTMMFE). The RING-type; atypical zinc-finger motif lies at 547–586 (CAICYHEFTTSARITPCNHYFHALCLRKWLYIQDTCPMCH). Residues 602 to 668 (SNNNGFIAPN…AAAEFNDDTD (67 aa)) form a disordered region. Residues 618–630 (EALREDAAGSDRE) show a composition bias toward basic and acidic residues. A compositionally biased stretch (acidic residues) spans 631–641 (LNEDDSTDCDD). The residue at position 636 (Ser-636) is a Phosphoserine. Phosphothreonine occurs at positions 637 and 667.

In terms of assembly, interacts with VHL. Interacts with MHC class I and HM13. Component of SCAP-SREBP complex composed of SREBF2, SCAP and RNF139; the complex hampers the interaction between SCAP and SEC24B, thereby reducing SREBF2 proteolytic processing. Interacts with SREBF2 (via C-terminal domain). Interacts with SCAP; the interaction inhibits the interaction of SCAP with SEC24B and hampering the ER to Golgi transport of the SCAP-SREBP complex. Interacts with SEC24B. Interacts with INSIG1 and INSIG2. Interacts with EIF3F and EIF3H; the interaction leads to protein translation inhibitions in a ubiquitination-dependent manner. Interacts with XBP1 isoform 1; the interaction induces ubiquitination and degradation of XBP1 isoform 1. Interacts with AUP1, AMFR and UBE2G2; interaction with AUP1 facilitates interaction of RNF139 with ubiquitin-conjugating enzyme UBE2G2 and ubiquitin ligase AMFR/gp78, leading to sterol-induced ubiquitination of HMGCR and its subsequent proteasomal degradation. Autoubiquitinated. Ubiquitination is induced by sterol and leads to ist degradation via the ubiquitin-proteasome pathway.

The protein localises to the endoplasmic reticulum membrane. The catalysed reaction is S-ubiquitinyl-[E2 ubiquitin-conjugating enzyme]-L-cysteine + [acceptor protein]-L-lysine = [E2 ubiquitin-conjugating enzyme]-L-cysteine + N(6)-ubiquitinyl-[acceptor protein]-L-lysine.. It participates in protein modification; protein ubiquitination. Its function is as follows. E3-ubiquitin ligase; acts as a negative regulator of cell proliferation through mechanisms involving G2/M arrest and cell death. Required for MHC class I ubiquitination in cells expressing the cytomegalovirus protein US2 before dislocation from the endoplasmic reticulum (ER). Affects SREBP processing by hindering the SREBP-SCAP complex translocation from the ER to the Golgi, thereby reducing SREBF2 target gene expression. Involved in the sterol-accelerated degradation of HMGCR. This is achieved through binding to INSIG1 and/or INSIG2 at the ER membrane. In addition, interaction of RNF139 with AUP1 facilitates interaction of RNF139 with ubiquitin-conjugating enzyme UBE2G2 and ubiquitin ligase AMFR, leading to ubiquitination of HMGCR. The ubiquitinated HMGCR is then released from the ER by the complex into the cytosol for subsequent destruction. Required for INSIG1 ubiquitination. May be required for EIF3 complex ubiquitination. The polypeptide is E3 ubiquitin-protein ligase RNF139 (Mus musculus (Mouse)).